A 31-amino-acid polypeptide reads, in one-letter code: Photosystem II reaction center protein T (31 aa).

Residues 3 to 23 (SVAYILVLTMTLAVLFFAIAF) traverse the membrane as a helical segment.

It belongs to the PsbT family. PSII is composed of 1 copy each of membrane proteins PsbA, PsbB, PsbC, PsbD, PsbE, PsbF, PsbH, PsbI, PsbJ, PsbK, PsbL, PsbM, PsbT, PsbX, PsbY, PsbZ, Psb30/Ycf12, peripheral proteins PsbO, CyanoQ (PsbQ), PsbU, PsbV and a large number of cofactors. It forms dimeric complexes.

It is found in the cellular thylakoid membrane. Functionally, found at the monomer-monomer interface of the photosystem II (PS II) dimer, plays a role in assembly and dimerization of PSII. PSII is a light-driven water plastoquinone oxidoreductase, using light energy to abstract electrons from H(2)O, generating a proton gradient subsequently used for ATP formation. The chain is Photosystem II reaction center protein T from Rippkaea orientalis (strain PCC 8801 / RF-1) (Cyanothece sp. (strain PCC 8801)).